Here is a 499-residue protein sequence, read N- to C-terminus: Glycerol kinase (499 aa).

ADP is bound at residue Thr13. Positions 13, 14, and 15 each coordinate ATP. Thr13 provides a ligand contact to sn-glycerol 3-phosphate. Arg17 is an ADP binding site. Residues Arg83, Glu84, Tyr135, and Asp244 each coordinate sn-glycerol 3-phosphate. Glycerol contacts are provided by Arg83, Glu84, Tyr135, Asp244, and Gln245. ADP-binding residues include Thr266 and Gly309. Residues Thr266, Gly309, Gln313, and Gly410 each contribute to the ATP site. Gly410 and Asn414 together coordinate ADP.

Belongs to the FGGY kinase family.

The catalysed reaction is glycerol + ATP = sn-glycerol 3-phosphate + ADP + H(+). It participates in polyol metabolism; glycerol degradation via glycerol kinase pathway; sn-glycerol 3-phosphate from glycerol: step 1/1. With respect to regulation, inhibited by fructose 1,6-bisphosphate (FBP). Its function is as follows. Key enzyme in the regulation of glycerol uptake and metabolism. Catalyzes the phosphorylation of glycerol to yield sn-glycerol 3-phosphate. The polypeptide is Glycerol kinase (Paraburkholderia phytofirmans (strain DSM 17436 / LMG 22146 / PsJN) (Burkholderia phytofirmans)).